Here is a 303-residue protein sequence, read N- to C-terminus: Signal recognition particle receptor FtsY (303 aa).

Residues 108–115 (GVNGVGKT), 190–194 (DTAGR), and 254–257 (TKLD) each bind GTP.

It belongs to the GTP-binding SRP family. FtsY subfamily. Part of the signal recognition particle protein translocation system, which is composed of SRP and FtsY. SRP is a ribonucleoprotein composed of Ffh and a 4.5S RNA molecule.

The protein localises to the cell inner membrane. It localises to the cytoplasm. The enzyme catalyses GTP + H2O = GDP + phosphate + H(+). In terms of biological role, involved in targeting and insertion of nascent membrane proteins into the cytoplasmic membrane. Acts as a receptor for the complex formed by the signal recognition particle (SRP) and the ribosome-nascent chain (RNC). Interaction with SRP-RNC leads to the transfer of the RNC complex to the Sec translocase for insertion into the membrane, the hydrolysis of GTP by both Ffh and FtsY, and the dissociation of the SRP-FtsY complex into the individual components. This is Signal recognition particle receptor FtsY from Rickettsia typhi (strain ATCC VR-144 / Wilmington).